A 217-amino-acid chain; its full sequence is UDP-N-acetylglucosamine transferase subunit ALG14 (217 aa).

Topologically, residues 1–3 are lumenal; the sequence is MLS. The chain crosses the membrane as a helical span at residues 4 to 26; it reads ILILAATAAGLVILLFQRLWTVL. Over 27-217 the chain is Cytoplasmic; that stretch reads GPHHVTPRES…PKSVYLGRIV (191 aa).

The protein belongs to the ALG14 family. As to quaternary structure, forms with ALG13 the active heterodimeric UDP-N-acetylglucosamine transferase complex.

It is found in the endoplasmic reticulum membrane. Its function is as follows. Part of the UDP-N-acetylglucosamine transferase complex that operates in the biosynthetic pathway of dolichol-linked oligosaccharides, the glycan precursors employed in protein asparagine (N)-glycosylation. The assembly of dolichol-linked oligosaccharides begins on the cytosolic side of the endoplasmic reticulum membrane and finishes in its lumen. The sequential addition of sugars to dolichol pyrophosphate produces dolichol-linked oligosaccharides containing fourteen sugars, including two GlcNAcs, nine mannoses and three glucoses. Once assembled, the oligosaccharides are transferred from the lipid to nascent proteins by oligosaccharyltransferases. Functions as a protein-membrane adapter recruiting ALG13 at the cytoplasmic face of the endoplasmic reticulum, where the complex catalyzes the second step of dolichol pyrophosphate biosynthesis, transferring a beta1,4-linked N-acetylglucosamine (GlcNAc) from UDP-GlcNAc to GlcNAc-pyrophosphatedolichol (Gn-PDol) to produce N,N'-diacetylchitobiosyl diphosphodolichol. N,N'-diacetylchitobiosyl diphosphodolichol is a substrate for ALG1, the following enzyme in the biosynthetic pathway. This chain is UDP-N-acetylglucosamine transferase subunit ALG14, found in Mus musculus (Mouse).